The sequence spans 94 residues: ATP synthase subunit c (94 aa).

The next 2 helical transmembrane spans lie at 15 to 35 (IGVG…WGLI) and 58 to 78 (FIFA…AMWF).

It belongs to the ATPase C chain family. As to quaternary structure, F-type ATPases have 2 components, F(1) - the catalytic core - and F(0) - the membrane proton channel. F(1) has five subunits: alpha(3), beta(3), gamma(1), delta(1), epsilon(1). F(0) has three main subunits: a(1), b(2) and c(10-14). The alpha and beta chains form an alternating ring which encloses part of the gamma chain. F(1) is attached to F(0) by a central stalk formed by the gamma and epsilon chains, while a peripheral stalk is formed by the delta and b chains.

Its subcellular location is the cell inner membrane. Its function is as follows. F(1)F(0) ATP synthase produces ATP from ADP in the presence of a proton or sodium gradient. F-type ATPases consist of two structural domains, F(1) containing the extramembraneous catalytic core and F(0) containing the membrane proton channel, linked together by a central stalk and a peripheral stalk. During catalysis, ATP synthesis in the catalytic domain of F(1) is coupled via a rotary mechanism of the central stalk subunits to proton translocation. Key component of the F(0) channel; it plays a direct role in translocation across the membrane. A homomeric c-ring of between 10-14 subunits forms the central stalk rotor element with the F(1) delta and epsilon subunits. In Hydrogenovibrio crunogenus (strain DSM 25203 / XCL-2) (Thiomicrospira crunogena), this protein is ATP synthase subunit c.